A 61-amino-acid chain; its full sequence is Translational regulator CsrA (61 aa).

The protein belongs to the CsrA/RsmA family. In terms of assembly, homodimer; the beta-strands of each monomer intercalate to form a hydrophobic core, while the alpha-helices form wings that extend away from the core.

The protein localises to the cytoplasm. In terms of biological role, a key translational regulator that binds mRNA to regulate translation initiation and/or mRNA stability. Mediates global changes in gene expression, shifting from rapid growth to stress survival by linking envelope stress, the stringent response and the catabolite repression systems. Usually binds in the 5'-UTR; binding at or near the Shine-Dalgarno sequence prevents ribosome-binding, repressing translation, binding elsewhere in the 5'-UTR can activate translation and/or stabilize the mRNA. Its function is antagonized by small RNA(s). The protein is Translational regulator CsrA of Glaesserella parasuis serovar 5 (strain SH0165) (Haemophilus parasuis).